A 417-amino-acid chain; its full sequence is Aminoacyltransferase FemB (417 aa).

Belongs to the FemABX family.

The protein resides in the cytoplasm. It catalyses the reaction MurNAc-L-Ala-D-isoglutaminyl-L-Lys-(N(6)-tri-Gly)-D-Ala-D-Ala-diphospho-di-trans,octa-cis-undecaprenyl-GlcNAc + 2 glycyl-tRNA(Gly) = MurNAc-L-Ala-D-isoglutaminyl-L-Lys-(N(6)-penta-Gly)-D-Ala-D-Ala-diphospho-di-trans,octa-cis-undecaprenyl-GlcNAc + 2 tRNA(Gly) + 2 H(+). In terms of biological role, catalyzes the incorporation of amino acid(s) into the interchain peptide bridge of peptidoglycan, using aminoacyl-tRNA as amino acid donor. In Staphylococcus epidermidis, this protein is Aminoacyltransferase FemB (femB).